Here is a 349-residue protein sequence, read N- to C-terminus: Ferredoxin--NADP reductase 1 (349 aa).

FAD is bound by residues Glu36, Lys44, Tyr48, Ile88, Leu123, Asp290, and Ser331.

It belongs to the ferredoxin--NADP reductase type 2 family. Homodimer. Requires FAD as cofactor.

The enzyme catalyses 2 reduced [2Fe-2S]-[ferredoxin] + NADP(+) + H(+) = 2 oxidized [2Fe-2S]-[ferredoxin] + NADPH. The protein is Ferredoxin--NADP reductase 1 of Bacillus thuringiensis (strain Al Hakam).